Consider the following 158-residue polypeptide: Oocyte-secreted protein 2 (158 aa).

The signal sequence occupies residues 1-17; the sequence is MALEVLMLLAVLIWTGA.

Belongs to the PLAC1 family. Highly expressed in oocytes.

Its subcellular location is the secreted. The protein localises to the cytoplasm. Its function is as follows. Involved in oocyte maturation. The chain is Oocyte-secreted protein 2 (OOSP2) from Homo sapiens (Human).